We begin with the raw amino-acid sequence, 254 residues long: Large ribosomal subunit protein uL2 (254 aa).

The protein belongs to the universal ribosomal protein uL2 family.

This Candida glabrata (strain ATCC 2001 / BCRC 20586 / JCM 3761 / NBRC 0622 / NRRL Y-65 / CBS 138) (Yeast) protein is Large ribosomal subunit protein uL2 (RPL2).